The following is a 225-amino-acid chain: Biosynthetic peptidoglycan transglycosylase (225 aa).

A helical membrane pass occupies residues 8–28 (VLLIFIGAILFIQLWIFSSLV).

This sequence belongs to the glycosyltransferase 51 family.

The protein localises to the cell inner membrane. It catalyses the reaction [GlcNAc-(1-&gt;4)-Mur2Ac(oyl-L-Ala-gamma-D-Glu-L-Lys-D-Ala-D-Ala)](n)-di-trans,octa-cis-undecaprenyl diphosphate + beta-D-GlcNAc-(1-&gt;4)-Mur2Ac(oyl-L-Ala-gamma-D-Glu-L-Lys-D-Ala-D-Ala)-di-trans,octa-cis-undecaprenyl diphosphate = [GlcNAc-(1-&gt;4)-Mur2Ac(oyl-L-Ala-gamma-D-Glu-L-Lys-D-Ala-D-Ala)](n+1)-di-trans,octa-cis-undecaprenyl diphosphate + di-trans,octa-cis-undecaprenyl diphosphate + H(+). Its pathway is cell wall biogenesis; peptidoglycan biosynthesis. Peptidoglycan polymerase that catalyzes glycan chain elongation from lipid-linked precursors. The protein is Biosynthetic peptidoglycan transglycosylase of Acinetobacter baumannii (strain ATCC 17978 / DSM 105126 / CIP 53.77 / LMG 1025 / NCDC KC755 / 5377).